We begin with the raw amino-acid sequence, 1290 residues long: Nonribosomal peptide synthetase 6 (1290 aa).

Residues 1–27 (MTAIDVPWLSTPRRDNSHGTRSNSSCQ) are disordered. The tract at residues 260–657 (SYQELDCQAS…AQVEHHLRSC (398 aa)) is adenylation. The region spanning 775-851 (APETELERKL…GLAQTHRHPV (77 aa)) is the Carrier domain. O-(pantetheine 4'-phosphoryl)serine is present on S812. The disordered stretch occupies residues 846–870 (THRHPVRRAEVPRSSHDPDPFGRVR). Over residues 852-870 (RRAEVPRSSHDPDPFGRVR) the composition is skewed to basic and acidic residues. The interval 914 to 1162 (GGQLDPEQLR…PCMNIIPVRV (249 aa)) is condensation.

It belongs to the NRP synthetase family.

In terms of biological role, nonribosomal peptide synthesis (NRPS) is a key mechanism responsible for the biosynthesis of bioactive metabolites which are potentially contributing to organismal virulence. The polypeptide is Nonribosomal peptide synthetase 6 (NRPS6) (Aspergillus fumigatus (strain ATCC MYA-4609 / CBS 101355 / FGSC A1100 / Af293) (Neosartorya fumigata)).